We begin with the raw amino-acid sequence, 410 residues long: Protein CNPPD1 (410 aa).

Residues Cys233–Ile253 form a helical membrane-spanning segment.

The protein belongs to the CNPPD1 family.

It localises to the membrane. The sequence is that of Protein CNPPD1 (CNPPD1) from Pongo abelii (Sumatran orangutan).